A 497-amino-acid polypeptide reads, in one-letter code: Maintenance of mitochondrial morphology protein 1 (497 aa).

The Lumenal portion of the chain corresponds to 1 to 28; sequence MSSVLNPSSPHSWDLCCSSSSNRSYHRP. The chain crosses the membrane as a helical span at residues 29–55; sequence THPIVGLLVGQLSVVLLIGAFIKFFIF. Over 56–497 the chain is Cytoplasmic; the sequence is GEAPPSPSRS…GSLPDAVPIT (442 aa). Disordered stretches follow at residues 60 to 107, 284 to 330, 402 to 421, and 437 to 497; these read PSPS…SSST, ESST…STTG, TGVRGQEEQPDVSSSDAAGV, and EMLH…VPIT. The segment covering 66–77 has biased composition (basic residues); sequence QTHRTSQHKRSY. The segment covering 81 to 94 has biased composition (basic and acidic residues); it reads GARDLSPRTLKEKP. Polar residues-rich tracts occupy residues 95 to 107, 284 to 302, and 311 to 330; these read SSNVLRPVPSSST, ESSTNLTPTSSNIDTNLRS, and PQESSTTDEGSQGGATSTTG. One can recognise an SMP-LTD domain in the interval 140–393; sequence QPESLDWFNV…EPRVQVVALP (254 aa). Over residues 412-421 the composition is skewed to low complexity; it reads DVSSSDAAGV. Over residues 440-451 the composition is skewed to basic and acidic residues; sequence HAAREVDAEGLR. The span at 462-473 shows a compositional bias: polar residues; the sequence is GSSSKYAQQNQS. Residues 474 to 484 show a composition bias toward basic and acidic residues; it reads SRERGRADDPF.

Belongs to the MMM1 family. As to quaternary structure, homodimer. Component of the ER-mitochondria encounter structure (ERMES) or MDM complex, composed of MMM1, MDM10, MDM12 and MDM34. An MMM1 homodimer associates with one molecule of MDM12 on each side in a pairwise head-to-tail manner, and the SMP-LTD domains of MMM1 and MDM12 generate a continuous hydrophobic tunnel for phospholipid trafficking.

It localises to the endoplasmic reticulum membrane. Component of the ERMES/MDM complex, which serves as a molecular tether to connect the endoplasmic reticulum (ER) and mitochondria. Components of this complex are involved in the control of mitochondrial shape and protein biogenesis, and function in nonvesicular lipid trafficking between the ER and mitochondria. The MDM12-MMM1 subcomplex functions in the major beta-barrel assembly pathway that is responsible for biogenesis of all outer membrane beta-barrel proteins, and acts in a late step after the SAM complex. The MDM10-MDM12-MMM1 subcomplex further acts in the TOM40-specific pathway after the action of the MDM12-MMM1 complex. Essential for establishing and maintaining the structure of mitochondria and maintenance of mtDNA nucleoids. This is Maintenance of mitochondrial morphology protein 1 from Uncinocarpus reesii (strain UAMH 1704).